Here is a 339-residue protein sequence, read N- to C-terminus: Probable long-chain-alcohol O-fatty-acyltransferase 7 (339 aa).

The next 7 helical transmembrane spans lie at 7–27 (SLIN…CLPP), 39–59 (IFPV…SIFT), 113–133 (HLST…LYVH), 143–163 (FLLC…LTLL), 226–246 (MLIG…VVFF), 254–274 (TGEV…EVAA), and 287–307 (PVVS…WLFF).

It belongs to the wax synthase family.

It is found in the membrane. The catalysed reaction is a long chain fatty alcohol + a fatty acyl-CoA = a wax ester + CoA. Catalyzes the final step in the synthesis of long-chain linear esters (waxes). This Arabidopsis thaliana (Mouse-ear cress) protein is Probable long-chain-alcohol O-fatty-acyltransferase 7 (AT7).